Reading from the N-terminus, the 251-residue chain is Triosephosphate isomerase (251 aa).

Position 12-14 (12-14 (NWK)) interacts with substrate. His-99 acts as the Electrophile in catalysis. Glu-169 functions as the Proton acceptor in the catalytic mechanism. Substrate contacts are provided by residues Gly-175, Ser-214, and 235–236 (GG).

Belongs to the triosephosphate isomerase family. As to quaternary structure, homodimer.

The protein localises to the cytoplasm. It carries out the reaction D-glyceraldehyde 3-phosphate = dihydroxyacetone phosphate. The protein operates within carbohydrate biosynthesis; gluconeogenesis. It participates in carbohydrate degradation; glycolysis; D-glyceraldehyde 3-phosphate from glycerone phosphate: step 1/1. Involved in the gluconeogenesis. Catalyzes stereospecifically the conversion of dihydroxyacetone phosphate (DHAP) to D-glyceraldehyde-3-phosphate (G3P). This is Triosephosphate isomerase from Bradyrhizobium sp. (strain ORS 278).